Reading from the N-terminus, the 108-residue chain is Replication restart protein PriB (108 aa).

In terms of domain architecture, SSB spans 11 to 108; it reads INRNQVIISG…VLHVRDTRII (98 aa).

The protein belongs to the PriB family. Homodimer. Interacts with PriA and DnaT. Component of the replication restart primosome. Primosome assembly occurs via a 'hand-off' mechanism. PriA binds to replication forks, subsequently PriB then DnaT bind; DnaT then displaces ssDNA to generate the helicase loading substrate.

Involved in the restart of stalled replication forks, which reloads the replicative helicase on sites other than the origin of replication; the PriA-PriB pathway is the major replication restart pathway. During primosome assembly it facilitates complex formation between PriA and DnaT on DNA; stabilizes PriA on DNA. Stimulates the DNA unwinding activity of PriA helicase. The sequence is that of Replication restart protein PriB from Nitrosomonas europaea (strain ATCC 19718 / CIP 103999 / KCTC 2705 / NBRC 14298).